The chain runs to 378 residues: Ferrochelatase (378 aa).

Fe cation is bound by residues His-214 and Glu-295.

It belongs to the ferrochelatase family.

The protein localises to the cytoplasm. The enzyme catalyses heme b + 2 H(+) = protoporphyrin IX + Fe(2+). Its pathway is porphyrin-containing compound metabolism; protoheme biosynthesis; protoheme from protoporphyrin-IX: step 1/1. Catalyzes the ferrous insertion into protoporphyrin IX. The protein is Ferrochelatase of Hydrogenovibrio crunogenus (strain DSM 25203 / XCL-2) (Thiomicrospira crunogena).